Consider the following 294-residue polypeptide: Uracil-DNA glycosylase (294 aa).

Residue aspartate 139 is the Proton acceptor of the active site.

This sequence belongs to the uracil-DNA glycosylase (UDG) superfamily. UNG family.

The protein localises to the host nucleus. It carries out the reaction Hydrolyzes single-stranded DNA or mismatched double-stranded DNA and polynucleotides, releasing free uracil.. In terms of biological role, excises uracil residues from the DNA which can arise as a result of misincorporation of dUMP residues by DNA polymerase or deamination of cytosines. Therefore may reduce deleterious uracil incorporation into the viral genome, particularly in terminally differentiated cells which lack DNA repair enzymes. The sequence is that of Uracil-DNA glycosylase (UL2) from Human herpesvirus 2 (strain 333) (HHV-2).